Here is a 310-residue protein sequence, read N- to C-terminus: MRIVFAGTPEFAAEHLKALLDTPHQLVAVYTQPDRPAGRGQKLMPSAVKSLALEHGLPVIQPPSLRSADAQAELAALRPDLMVVVAYGLILPQAVLDIPRLGCINSHASLLPRWRGAAPIQRAVEAGDAQSGVTVMQMEAGLDTGPMLLKVATPIAADDSGGSLHDRLAALGPKAVVEAIAGLAAGTLRGEVQDDALATYAHKLNKDEARLDWSRPAVELERQVRAFTPWPVCHSSLAGASLKVLGASLGHGSGTPGSILEASRDGLLVACGEGALRLTRLQLPGGKPLAFADLYNSRREQFAAGQVLGQ.

109–112 (SLLP) contacts (6S)-5,6,7,8-tetrahydrofolate.

Belongs to the Fmt family.

The catalysed reaction is L-methionyl-tRNA(fMet) + (6R)-10-formyltetrahydrofolate = N-formyl-L-methionyl-tRNA(fMet) + (6S)-5,6,7,8-tetrahydrofolate + H(+). In terms of biological role, attaches a formyl group to the free amino group of methionyl-tRNA(fMet). The formyl group appears to play a dual role in the initiator identity of N-formylmethionyl-tRNA by promoting its recognition by IF2 and preventing the misappropriation of this tRNA by the elongation apparatus. This Pseudomonas paraeruginosa (strain DSM 24068 / PA7) (Pseudomonas aeruginosa (strain PA7)) protein is Methionyl-tRNA formyltransferase.